Consider the following 496-residue polypeptide: Glycerol kinase (496 aa).

Thr-12 contacts ADP. 3 residues coordinate ATP: Thr-12, Thr-13, and Ser-14. Thr-12 is a binding site for sn-glycerol 3-phosphate. An ADP-binding site is contributed by Arg-16. Sn-glycerol 3-phosphate is bound by residues Arg-82, Glu-83, and Tyr-134. The glycerol site is built by Arg-82, Glu-83, and Tyr-134. Residue His-230 is modified to Phosphohistidine; by HPr. Residue Asp-244 participates in sn-glycerol 3-phosphate binding. Residues Asp-244 and Gln-245 each contribute to the glycerol site. Residues Thr-266 and Gly-309 each coordinate ADP. Thr-266, Gly-309, Gln-313, and Gly-410 together coordinate ATP. Residues Gly-410 and Asn-414 each coordinate ADP.

The protein belongs to the FGGY kinase family. As to quaternary structure, homotetramer and homodimer (in equilibrium). In terms of processing, the phosphoenolpyruvate-dependent sugar phosphotransferase system (PTS), including enzyme I, and histidine-containing protein (HPr) are required for the phosphorylation, which leads to the activation of the enzyme.

The catalysed reaction is glycerol + ATP = sn-glycerol 3-phosphate + ADP + H(+). Its pathway is polyol metabolism; glycerol degradation via glycerol kinase pathway; sn-glycerol 3-phosphate from glycerol: step 1/1. Activated by phosphorylation and inhibited by fructose 1,6-bisphosphate (FBP). Key enzyme in the regulation of glycerol uptake and metabolism. Catalyzes the phosphorylation of glycerol to yield sn-glycerol 3-phosphate. The chain is Glycerol kinase from Bacillus licheniformis (strain ATCC 14580 / DSM 13 / JCM 2505 / CCUG 7422 / NBRC 12200 / NCIMB 9375 / NCTC 10341 / NRRL NRS-1264 / Gibson 46).